Consider the following 480-residue polypeptide: UDP-N-acetylmuramate--L-alanine ligase (480 aa).

Position 126–132 (126–132 (GTHGKTT)) interacts with ATP.

The protein belongs to the MurCDEF family.

The protein localises to the cytoplasm. The enzyme catalyses UDP-N-acetyl-alpha-D-muramate + L-alanine + ATP = UDP-N-acetyl-alpha-D-muramoyl-L-alanine + ADP + phosphate + H(+). It participates in cell wall biogenesis; peptidoglycan biosynthesis. Its function is as follows. Cell wall formation. The polypeptide is UDP-N-acetylmuramate--L-alanine ligase (Blochmanniella pennsylvanica (strain BPEN)).